We begin with the raw amino-acid sequence, 228 residues long: Ribose-5-phosphate isomerase A (228 aa).

Residues T32–T35, D85–D88, and K98–G101 contribute to the substrate site. Residue E107 is the Proton acceptor of the active site. Residue K125 coordinates substrate.

It belongs to the ribose 5-phosphate isomerase family. As to quaternary structure, homodimer.

The catalysed reaction is aldehydo-D-ribose 5-phosphate = D-ribulose 5-phosphate. It participates in carbohydrate degradation; pentose phosphate pathway; D-ribose 5-phosphate from D-ribulose 5-phosphate (non-oxidative stage): step 1/1. Its function is as follows. Catalyzes the reversible conversion of ribose-5-phosphate to ribulose 5-phosphate. The polypeptide is Ribose-5-phosphate isomerase A (Cupriavidus necator (strain ATCC 17699 / DSM 428 / KCTC 22496 / NCIMB 10442 / H16 / Stanier 337) (Ralstonia eutropha)).